The chain runs to 67 residues: ATP synthase subunit c (67 aa).

Transmembrane regions (helical) follow at residues 6–26 (ILAL…LVAN) and 46–66 (IMGV…TFFV).

The protein belongs to the ATPase C chain family. As to quaternary structure, F-type ATPases have 2 components, F(1) - the catalytic core - and F(0) - the membrane proton channel. F(1) has five subunits: alpha(3), beta(3), gamma(1), delta(1), epsilon(1). F(0) has three main subunits: a(1), b(2) and c(10-14). The alpha and beta chains form an alternating ring which encloses part of the gamma chain. F(1) is attached to F(0) by a central stalk formed by the gamma and epsilon chains, while a peripheral stalk is formed by the delta and b chains.

The protein resides in the cell membrane. Functionally, f(1)F(0) ATP synthase produces ATP from ADP in the presence of a proton or sodium gradient. F-type ATPases consist of two structural domains, F(1) containing the extramembraneous catalytic core and F(0) containing the membrane proton channel, linked together by a central stalk and a peripheral stalk. During catalysis, ATP synthesis in the catalytic domain of F(1) is coupled via a rotary mechanism of the central stalk subunits to proton translocation. In terms of biological role, key component of the F(0) channel; it plays a direct role in translocation across the membrane. A homomeric c-ring of between 10-14 subunits forms the central stalk rotor element with the F(1) delta and epsilon subunits. The polypeptide is ATP synthase subunit c (Streptococcus mutans serotype c (strain ATCC 700610 / UA159)).